The chain runs to 288 residues: Protein-S-isoprenylcysteine O-methyltransferase (288 aa).

The chain crosses the membrane as a helical span at residues 13–29 (SIVSFTLGASVISLPLL). At 30-45 (TSSFTEQTLLAAAPGR) the chain is on the lumenal side. Residues 46-63 (IALVFFIAALNGLLLLLY) form a helical membrane-spanning segment. Topologically, residues 64 to 73 (KAQLYQVAIR) are cytoplasmic. The helical transmembrane segment at 74 to 91 (ASFLGFAFGCGLLLSITQ) threads the bilayer. The Lumenal segment spans residues 92 to 96 (SPWKP). A helical transmembrane segment spans residues 97–116 (FGWYVCSLSFFHYSEYLVTA). Over 117–135 (MNNPRSLSIDSFLLNHSLE) the chain is Cytoplasmic. Residues 136 to 153 (YTLAALSSWVEFTIETTI) form a helical membrane-spanning segment. Topologically, residues 154 to 158 (YPDLK) are lumenal. Residues 159 to 178 (QITWLSVIGLIMVLFGEVLR) form a helical membrane-spanning segment. The Cytoplasmic segment spans residues 179-216 (KCAMLTAGSNFNHIVQNEKSDSHTLVTSGVYSWFRHPS). S-adenosyl-L-methionine-binding positions include Gln194, 201–204 (HTLV), Tyr209, and 214–217 (HPSY). The chain crosses the membrane as a helical span at residues 217 to 232 (YVGWFYWSIGTQVLLC). Residue Asn233 is a topological domain, lumenal. Residues 234-248 (PLCLVGYTLASWRFF) traverse the membrane as a helical segment. Residues 249 to 288 (SERIEEEEFSLIHFFGENYLEYKKKVPTGLPFIKGVKMEP) are Cytoplasmic-facing. A substrate-binding site is contributed by Arg251. Glu255 serves as a coordination point for S-adenosyl-L-methionine.

The protein belongs to the class VI-like SAM-binding methyltransferase superfamily. Isoprenylcysteine carboxyl methyltransferase family.

Its subcellular location is the endoplasmic reticulum membrane. The enzyme catalyses [protein]-C-terminal S-[(2E,6E)-farnesyl]-L-cysteine + S-adenosyl-L-methionine = [protein]-C-terminal S-[(2E,6E)-farnesyl]-L-cysteine methyl ester + S-adenosyl-L-homocysteine. Catalyzes the post-translational methylation of isoprenylated C-terminal cysteine residues. The protein is Protein-S-isoprenylcysteine O-methyltransferase (icmt) of Xenopus laevis (African clawed frog).